Consider the following 277-residue polypeptide: Putative protease slr0021 (277 aa).

Catalysis depends on serine 85, which acts as the Nucleophile. Residue lysine 137 is the Proton donor/acceptor of the active site.

The protein belongs to the peptidase S49 family.

The polypeptide is Putative protease slr0021 (Synechocystis sp. (strain ATCC 27184 / PCC 6803 / Kazusa)).